A 414-amino-acid polypeptide reads, in one-letter code: Serine/threonine transporter SstT (414 aa).

8 consecutive transmembrane segments (helical) span residues 22-42 (GLVL…TIGF), 54-74 (IFVK…VMAA), 89-109 (IIVL…IAGF), 148-168 (AIFK…GLAL), 189-209 (IVHV…AETL), 223-243 (LLAV…PILV), 305-325 (MAGA…TLGL), and 337-357 (IVAA…LLLI).

Belongs to the dicarboxylate/amino acid:cation symporter (DAACS) (TC 2.A.23) family.

It is found in the cell inner membrane. It catalyses the reaction L-serine(in) + Na(+)(in) = L-serine(out) + Na(+)(out). The catalysed reaction is L-threonine(in) + Na(+)(in) = L-threonine(out) + Na(+)(out). Its function is as follows. Involved in the import of serine and threonine into the cell, with the concomitant import of sodium (symport system). In Haemophilus influenzae (strain 86-028NP), this protein is Serine/threonine transporter SstT.